A 142-amino-acid chain; its full sequence is 5a,11a-dehydrotetracycline/5a,11a-dehydrooxytetracycline reductase (142 aa).

The protein belongs to the pyridoxamine 5'-phosphate oxidase family.

It catalyses the reaction tetracycline + oxidized coenzyme F420-(gamma-L-Glu)(n) + H(+) = 5a,11a-dehydrotetracycline + reduced coenzyme F420-(gamma-L-Glu)(n). It carries out the reaction oxytetracycline + oxidized coenzyme F420-(gamma-L-Glu)(n) + H(+) = 5a,11a-dehydrooxytetracycline + reduced coenzyme F420-(gamma-L-Glu)(n). Its pathway is antibiotic biosynthesis; oxytetracycline biosynthesis. Functionally, involved in the biosynthesis of the antibiotics tetracycline and oxytetracycline. Catalyzes the C(5) reduction of 5a,11a-dehydrooxytetracycline to yield oxytetracycline as a major product. Also catalyzes the C(12) reduction of 5a,11a-dehydrotetracycline (12-dehydrotetracycline) to produce tetracycline as a minor product. This Streptomyces rimosus subsp. rimosus (strain ATCC 10970 / DSM 40260 / JCM 4667 / NRRL 2234) protein is 5a,11a-dehydrotetracycline/5a,11a-dehydrooxytetracycline reductase.